The sequence spans 642 residues: Kinesin-2b (642 aa).

The region spanning 12–344 (NVMVMVRVRP…LRYADRAKQI (333 aa)) is the Kinesin motor domain. Residue 107 to 114 (GQTGSGKT) coordinates ATP. Glycine 110, glycine 112, lysine 113, and threonine 114 together coordinate ADP. Threonine 114 is a binding site for Mg(2+). A coiled-coil region spans residues 415-475 (VQSLRKNLDK…ERKAKERQLM (61 aa)).

The protein belongs to the TRAFAC class myosin-kinesin ATPase superfamily. Kinesin family. Kinesin II subfamily.

It is found in the cell projection. The protein resides in the cilium. Its subcellular location is the flagellum. It localises to the cytoplasm. The protein localises to the cytoskeleton. It is found in the flagellum axoneme. The protein resides in the flagellum basal body. Its function is as follows. Involved in anterograde intraflagellar transport (IFT). Involved in flagellar assembly. The sequence is that of Kinesin-2b from Giardia intestinalis (strain ATCC 50803 / WB clone C6) (Giardia lamblia).